Reading from the N-terminus, the 461-residue chain is Mitochondrial distribution and morphology protein 12 (461 aa).

An SMP-LTD domain is found at 1-454 (MSLDLDWNLL…YPNYYTIDLP (454 aa)). Disordered stretches follow at residues 75–104 (RRRGARQTTPASNATTLVESPTDSFGVHHG) and 226–301 (DASS…PSSA). Polar residues-rich tracts occupy residues 80 to 97 (RQTTPASNATTLVESPTD) and 272 to 288 (RATSAPSFRSISGQNSP).

The protein belongs to the MDM12 family. In terms of assembly, component of the ER-mitochondria encounter structure (ERMES) or MDM complex, composed of MMM1, MDM10, MDM12 and MDM34. An MMM1 homodimer associates with one molecule of MDM12 on each side in a pairwise head-to-tail manner, and the SMP-LTD domains of MMM1 and MDM12 generate a continuous hydrophobic tunnel for phospholipid trafficking.

The protein resides in the mitochondrion outer membrane. It localises to the endoplasmic reticulum membrane. In terms of biological role, component of the ERMES/MDM complex, which serves as a molecular tether to connect the endoplasmic reticulum (ER) and mitochondria. Components of this complex are involved in the control of mitochondrial shape and protein biogenesis, and function in nonvesicular lipid trafficking between the ER and mitochondria. MDM12 is required for the interaction of the ER-resident membrane protein MMM1 and the outer mitochondrial membrane-resident beta-barrel protein MDM10. The MDM12-MMM1 subcomplex functions in the major beta-barrel assembly pathway that is responsible for biogenesis of all mitochondrial outer membrane beta-barrel proteins, and acts in a late step after the SAM complex. The MDM10-MDM12-MMM1 subcomplex further acts in the TOM40-specific pathway after the action of the MDM12-MMM1 complex. Essential for establishing and maintaining the structure of mitochondria and maintenance of mtDNA nucleoids. The chain is Mitochondrial distribution and morphology protein 12 from Mycosarcoma maydis (Corn smut fungus).